The chain runs to 543 residues: Serendipity locus protein alpha (543 aa).

It is found in the cytoplasm. It localises to the cell membrane. Its function is as follows. Required for the cellularization of the syncytial blastoderm embryo. Involved in the localization of the actin filaments just prior to and during plasma membrane invagination. Sry-alpha together with nullo and bnk may provide auxiliary functions, by acting both to stabilize a large and dynamic microfilament structure and regulate its functions. This is Serendipity locus protein alpha (Sry-alpha) from Drosophila subobscura (Fruit fly).